The sequence spans 896 residues: NET1-associated nuclear protein 1 (896 aa).

WD repeat units follow at residues 295-334, 490-542, 552-595, and 605-645; these read WHIDSVLSLSFSHDGSYLLSGGWEKVMSLWQLETNSQQFL, LQDP…TNWN, GISV…SNWC, and NHFS…ESLE.

As to quaternary structure, interacts with snoRNA U3. Interacts with MPP10. Component of the ribosomal small subunit (SSU) processome composed of at least 40 protein subunits and snoRNA U3. In the absence of snoRNA3, forms a complex with other t-UTPs. This complex can associate with pre-18S ribosomal RNAs.

It localises to the nucleus. The protein resides in the nucleolus. In terms of biological role, involved in nucleolar processing of pre-18S ribosomal RNA. Required for optimal pre-ribosomal RNA transcription by RNA polymerase I together with a subset of U3 proteins required for transcription (t-UTPs). The protein is NET1-associated nuclear protein 1 (NAN1) of Saccharomyces cerevisiae (strain ATCC 204508 / S288c) (Baker's yeast).